Consider the following 517-residue polypeptide: Glutamate--tRNA ligase (517 aa).

Residues 10–20 carry the 'HIGH' region motif; that stretch reads PSPSGFLHVGG. Residues C107, C109, C134, and D136 each contribute to the Zn(2+) site. Positions 250–254 match the 'KMSKS' region motif; it reads KLSKR. Position 253 (K253) interacts with ATP.

The protein belongs to the class-I aminoacyl-tRNA synthetase family. Glutamate--tRNA ligase type 1 subfamily. Monomer. Requires Zn(2+) as cofactor.

The protein localises to the cytoplasm. It catalyses the reaction tRNA(Glu) + L-glutamate + ATP = L-glutamyl-tRNA(Glu) + AMP + diphosphate. In terms of biological role, catalyzes the attachment of glutamate to tRNA(Glu) in a two-step reaction: glutamate is first activated by ATP to form Glu-AMP and then transferred to the acceptor end of tRNA(Glu). The protein is Glutamate--tRNA ligase of Leptospira biflexa serovar Patoc (strain Patoc 1 / ATCC 23582 / Paris).